The primary structure comprises 2527 residues: Leucine-rich repeat serine/threonine-protein kinase 2 (2527 aa).

The tract at residues 1–969 (MASGACQGCE…RSSRLPSHMR (969 aa)) is required for RAB29-mediated activation. The stretch at 9 to 33 (CEEEEEEEALKKLIVRLNNVQEGKQ) forms a coiled coil. A phosphoserine mark is found at Ser910, Ser935, Ser955, and Ser973. Residues 957-979 (ESLRSSRLPSHMRQSDSSSSLAS) are disordered. Low complexity predominate over residues 961–978 (SSRLPSHMRQSDSSSSLA). LRR repeat units lie at residues 983-1004 (HITSLDLSANELKDIDALSQKC), 1012-1033 (HLTKLELHQNSLTSFPQQLCET), 1036-1057 (CLIHLDLHSNKFTSFPSFVLKM), 1059-1080 (RITNLDASRNDIGPTVVLDPAM), 1084-1105 (SLKQLNLSYNQLSSIPENLAQV), 1108-1129 (KLEQLLLEGNKISGICSPLSLK), 1130-1150 (ELKILNLSKNHIPSLPGDFLE), 1156-1171 (ESFSARMNFLAAMPAL), 1174-1196 (SITSLKLSQNSFTCIPEAIFSLP), 1197-1218 (HLRSLDMSHNNIECLPGPAHWK), 1221-1245 (NLRELIFSKNQISTLDFSENPHVWS), 1246-1267 (RVEKLHLSHNKLKEIPPEIGCL), and 1269-1291 (NLTSLDVSYNLELRSFPNEMGKL). Ser1292 is modified (phosphoserine; by autocatalysis). Residues 1328–1511 (KAVPYNRMKL…KTIINESLNF (184 aa)) form the Roc domain. 1341 to 1348 (GNTGSGKT) provides a ligand contact to GTP. The residue at position 1444 (Ser1444) is a Phosphoserine. In terms of domain architecture, COR spans 1543 to 1740 (TEFPVINRKH…RMYWRQGIYL (198 aa)). The Protein kinase domain maps to 1879–2146 (EAPEFLLGDG…LICLMRHILI (268 aa)). Residues Leu1885, Asp1887, Gly1888, Gly1891, Val1893, Ala1904, Lys1906, Met1947, Glu1948, Ala1950, Ser1954, and Arg1957 each contribute to the ATP site. The active-site Proton acceptor is the Asp1994. Residues His1998, Leu2001, Ala2016, and Asp2017 each coordinate ATP. 2098–2121 (EYGCAPWPMVEKLITKCLKENPQE) is a binding site for GTP. 7 WD repeats span residues 2139–2183 (CLMR…SLFD), 2188–2228 (RYSY…LVIN), 2233–2276 (TKRH…MIFE), 2281–2327 (KCKG…FSFS), 2333–2377 (QKLI…EVWD), 2402–2438 (KESKHQLSYSGRVKALCLQKNTALWIGTGGGHILLLD), and 2443–2497 (RVIR…SIWD). 2295-2298 (DVST) contributes to the GTP binding site.

This sequence belongs to the protein kinase superfamily. TKL Ser/Thr protein kinase family. In terms of assembly, homodimer. Homotetramer; when activated by GTP-bound RAB29. Interacts with PRKN, PRDX3 and TPCN2. Interacts with VPS35. Interacts (via N-terminus) with RAB29; this interaction is direct and stimulates kinase activity. Interacts (via ROC domain) with SEC16A. Interacts with APP; interaction promotes phosphorylation of 'Thr-743' of APP. Interacts with MAPT. Interacts with RAB8A, RAB10, and RAB12. Interacts (via N-terminus) with RAB32. Interacts with YWHAG; this interaction is dependent on phosphorylation of Ser-910 and either Ser-935 or Ser-1444. Interacts with SFN; this interaction is dependent on phosphorylation of Ser-910 and/or Ser-935. Requires Mg(2+) as cofactor. Post-translationally, autophosphorylated at Ser-1292. Autophosphorylation is stimulated by RAB29. Phosphorylation of Ser-910 and Ser-935 or Ser-1444 facilitates interaction with YWHAG. Phosphorylation of Ser-910 and/or Ser-935 facilitates interaction with SFN. Ubiquitinated by TRIM1; undergoes 'Lys-48'-linked polyubiquitination leading to proteasomal degradation. In terms of tissue distribution, expressed in the brain (at protein level). Detected throughout the adult brain. Expressed in deep cerebral cortex layers, superficial cingulate cortex layers, the piriform cortex, hippocampal formation, caudate putamen, substantia nigra, the basolateral and basomedial anterior amygdala nuclei, reticular thalamic nucleus and also in the cerebellar granular cell layer. Highly expressed in the striatum, cortex and olfactory tubercle. Little or no expression in the substantia nigra, where dopaminergic neurons preferentially degenerate in Parkinson disease. Expression is particularly high in brain dopaminoceptive areas. High and strikingly specific expression in striatum and parts of cortex and no signals in dopamine neurons.

The protein resides in the cytoplasmic vesicle. Its subcellular location is the perikaryon. It is found in the cell projection. The protein localises to the axon. It localises to the dendrite. The protein resides in the golgi apparatus membrane. Its subcellular location is the endoplasmic reticulum membrane. It is found in the secretory vesicle. The protein localises to the synaptic vesicle membrane. It localises to the endosome. The protein resides in the lysosome. Its subcellular location is the mitochondrion outer membrane. It is found in the cytoplasm. The protein localises to the cytoskeleton. It localises to the phagosome. The enzyme catalyses L-threonyl-[protein] + ATP = O-phospho-L-threonyl-[protein] + ADP + H(+). It catalyses the reaction L-seryl-[protein] + ATP = O-phospho-L-seryl-[protein] + ADP + H(+). It carries out the reaction GTP + H2O = GDP + phosphate + H(+). With respect to regulation, kinase activity is regulated by the GTPase activity of the ROC domain. GTP-bound LRRK2 kinase activity is stimulated by RAB29. Phosphorylation of RAB10 'Thr-73' is stimulated by RAB29 and RAB32. Inhibited by small molecule inhibitors MLi-2 and LRRK2-IN-1. Its function is as follows. Serine/threonine-protein kinase which phosphorylates a broad range of proteins involved in multiple processes such as neuronal plasticity, innate immunity, autophagy, and vesicle trafficking. Is a key regulator of RAB GTPases by regulating the GTP/GDP exchange and interaction partners of RABs through phosphorylation. Phosphorylates RAB3A, RAB3B, RAB3C, RAB3D, RAB8A, RAB8B, RAB10, RAB12, RAB29, RAB35, and RAB43. Regulates the RAB3IP-catalyzed GDP/GTP exchange for RAB8A through the phosphorylation of 'Thr-72' on RAB8A. Inhibits the interaction between RAB8A and GDI1 and/or GDI2 by phosphorylating 'Thr-72' on RAB8A. Regulates primary ciliogenesis through phosphorylation of RAB8A and RAB10, which promotes SHH signaling in the brain. Together with RAB29, plays a role in the retrograde trafficking pathway for recycling proteins, such as mannose-6-phosphate receptor (M6PR), between lysosomes and the Golgi apparatus in a retromer-dependent manner. Regulates neuronal process morphology in the intact central nervous system (CNS). Plays an important role in recruiting SEC16A to endoplasmic reticulum exit sites (ERES) and in regulating ER to Golgi vesicle-mediated transport and ERES organization. Positively regulates autophagy through a calcium-dependent activation of the CaMKK/AMPK signaling pathway. The process involves activation of nicotinic acid adenine dinucleotide phosphate (NAADP) receptors, increase in lysosomal pH, and calcium release from lysosomes. Phosphorylates PRDX3. By phosphorylating APP on 'Thr-743', which promotes the production and the nuclear translocation of the APP intracellular domain (AICD), regulates dopaminergic neuron apoptosis. Acts as a positive regulator of innate immunity by mediating phosphorylation of RIPK2 downstream of NOD1 and NOD2, thereby enhancing RIPK2 activation. Independent of its kinase activity, inhibits the proteasomal degradation of MAPT, thus promoting MAPT oligomerization and secretion. In addition, has GTPase activity via its Roc domain which regulates LRKK2 kinase activity. Recruited by RAB29/RAB7L1 to overloaded lysosomes where it phosphorylates and stabilizes RAB8A and RAB10 which promote lysosomal content release and suppress lysosomal enlargement through the EHBP1 and EHBP1L1 effector proteins. The protein is Leucine-rich repeat serine/threonine-protein kinase 2 (Lrrk2) of Mus musculus (Mouse).